The chain runs to 574 residues: Optineurin (574 aa).

Positions 1–33 (MSHQPLSCLTEKGDSPTETTGNGPPTLAHPNLD) are disordered. The stretch at 38 to 170 (HELLQQMREL…VSELQLKLNS (133 aa)) forms a coiled coil. Residues 58–209 (MKLNNQAMKG…GPIRTDSIDT (152 aa)) form an interaction with Rab8 region. Positions 176–181 (DSFVEI) match the LIR motif. Residue serine 177 is modified to Phosphoserine; by TBK1. Serine 198 is modified (phosphoserine). A coiled-coil region spans residues 233-496 (CLREGNQKVE…ALQLAVLLKD (264 aa)). Over residues 262 to 286 (AKDRSETETQTEEHKEQEKEEEKSP) the composition is skewed to basic and acidic residues. Positions 262–292 (AKDRSETETQTEEHKEQEKEEEKSPETVGSE) are disordered. At serine 336 the chain carries Phosphoserine. The tract at residues 405-574 (KRRESEKVDK…LLIHVTDCII (170 aa)) is interaction with HD. The segment at 406–515 (RRESEKVDKV…RQSLMEMQSR (110 aa)) is interaction with MYO6. The UBAN signature appears at 468–473 (DFHAER). Serine 521 is modified (phosphoserine). Residues 544-574 (QQNIPIHSCPKCGEVLPDIDTLLIHVTDCII) form a CCHC NOA-type zinc finger. Zn(2+) contacts are provided by cysteine 552, cysteine 555, histidine 568, and cysteine 572.

Self-associates. Interacts with HD. Interacts with GTF3A. Interacts with MYO6. Interacts (via UBAN) with ubiquitinated TFRC. Interacts with GTP-bound Rab8 (RAB8A and/or RAB8B). Interacts with TBC1D17. Interacts with TBK1. Interacts with TRAF3. Binds to linear ubiquitin chains. Interacts with LC3 family members MAP1LC3A, MAP1LC3B, GABARAP, GABARAPL1 and GABARAPL2; OPTN phosphorylation increases the association (at least with MAP1LC3B). Interacts with RAB12; the interaction may be indirect. Interacts with TBK1; this interaction leads to the Golgi localization of TBK1 and its subsequent activation. Interacts with palmitoyltransferase ZDHHC17/HIP14; the interaction does not lead to palmitoylation of OPTN. Interacts with CYLD. Interacts with TOM1; the interaction is indirect and is mediated by MYO6, which acts as a bridge between TOM1 and OPTN. Interacts with USP12; the interaction is independent of USP12 deubiquitinase activity and may be involved in regulation of autophagic flux. In terms of processing, phosphorylated by TBK1, leading to restrict bacterial proliferation in case of infection. As to expression, present in aqueous humor of the eye (at protein level). Expressed in trabecular meshwork and astrocytes.

The protein localises to the cytoplasm. The protein resides in the perinuclear region. It localises to the golgi apparatus. It is found in the trans-Golgi network. Its subcellular location is the cytoplasmic vesicle. The protein localises to the autophagosome. The protein resides in the recycling endosome. In terms of biological role, plays an important role in the maintenance of the Golgi complex, in membrane trafficking, in exocytosis, through its interaction with myosin VI and Rab8. Links myosin VI to the Golgi complex and plays an important role in Golgi ribbon formation. Negatively regulates the induction of IFNB in response to RNA virus infection. Plays a neuroprotective role in the eye and optic nerve. Probably part of the TNF-alpha signaling pathway that can shift the equilibrium toward induction of cell death. May act by regulating membrane trafficking and cellular morphogenesis via a complex that contains Rab8 and huntingtin (HD). Mediates the interaction of Rab8 with the probable GTPase-activating protein TBC1D17 during Rab8-mediated endocytic trafficking, such as that of transferrin receptor (TFRC/TfR); regulates Rab8 recruitment to tubules emanating from the endocytic recycling compartment. Autophagy receptor that interacts directly with both the cargo to become degraded and an autophagy modifier of the MAP1 LC3 family; targets ubiquitin-coated bacteria (xenophagy) and appears to function in the same pathway as SQSTM1 and CALCOCO2/NDP52. The protein is Optineurin (OPTN) of Sus scrofa (Pig).